The primary structure comprises 396 residues: Maltose/maltodextrin-binding periplasmic protein (396 aa).

Positions 1–26 (MKIKTGARILALSALTTMMFSASALA) are cleaved as a signal peptide.

The protein belongs to the bacterial solute-binding protein 1 family. As to quaternary structure, the complex is composed of two ATP-binding proteins (MalK), two transmembrane proteins (MalG and MalF) and a solute-binding protein (MalE).

The protein resides in the periplasm. In terms of biological role, part of the ABC transporter complex MalEFGK involved in maltose/maltodextrin import. Binds maltose and higher maltodextrins. The chain is Maltose/maltodextrin-binding periplasmic protein (malE) from Escherichia coli O157:H7.